The sequence spans 357 residues: Anthranilate phosphoribosyltransferase (357 aa).

5-phospho-alpha-D-ribose 1-diphosphate is bound by residues Gly-94, 97–98 (GD), Thr-102, 104–107 (NLST), 122–130 (KHGNRAASS), and Gly-134. Gly-94 contributes to the anthranilate binding site. Ser-106 lines the Mg(2+) pocket. Anthranilate is bound at residue Asn-125. Residue Arg-180 participates in anthranilate binding. Mg(2+)-binding residues include Asp-238 and Glu-239.

The protein belongs to the anthranilate phosphoribosyltransferase family. As to quaternary structure, homodimer. It depends on Mg(2+) as a cofactor.

The enzyme catalyses N-(5-phospho-beta-D-ribosyl)anthranilate + diphosphate = 5-phospho-alpha-D-ribose 1-diphosphate + anthranilate. It functions in the pathway amino-acid biosynthesis; L-tryptophan biosynthesis; L-tryptophan from chorismate: step 2/5. Functionally, catalyzes the transfer of the phosphoribosyl group of 5-phosphorylribose-1-pyrophosphate (PRPP) to anthranilate to yield N-(5'-phosphoribosyl)-anthranilate (PRA). In Mycobacterium sp. (strain JLS), this protein is Anthranilate phosphoribosyltransferase.